The sequence spans 245 residues: tRNA (guanine-N(7)-)-methyltransferase (245 aa).

S-adenosyl-L-methionine is bound by residues Gly70, 93 to 94 (EI), 126 to 127 (NA), and Leu146. The active site involves Asp149. 224–226 (SEE) contributes to the S-adenosyl-L-methionine binding site.

Belongs to the class I-like SAM-binding methyltransferase superfamily. TrmB family.

It localises to the nucleus. The catalysed reaction is guanosine(46) in tRNA + S-adenosyl-L-methionine = N(7)-methylguanosine(46) in tRNA + S-adenosyl-L-homocysteine. It participates in tRNA modification; N(7)-methylguanine-tRNA biosynthesis. Functionally, catalyzes the formation of N(7)-methylguanine at position 46 (m7G46) in tRNA. The sequence is that of tRNA (guanine-N(7)-)-methyltransferase from Aedes aegypti (Yellowfever mosquito).